The chain runs to 242 residues: Small ribosomal subunit protein uS2 (242 aa).

The protein belongs to the universal ribosomal protein uS2 family.

In Shewanella frigidimarina (strain NCIMB 400), this protein is Small ribosomal subunit protein uS2.